Consider the following 603-residue polypeptide: Probable lysosomal cobalamin transporter (603 aa).

9 helical membrane passes run 13 to 33 (IWVA…ITVF), 50 to 70 (IVSL…IALV), 99 to 119 (IVYY…IPFA), 150 to 170 (IAFI…PTAA), 201 to 221 (LLMT…LALL), 318 to 338 (LFGG…MLIT), 353 to 373 (GYIL…VKAA), 381 to 401 (ILMA…IASV), and 422 to 442 (ALLI…YAVV). The N-linked (GlcNAc...) asparagine glycan is linked to Asn509. Residues 512–532 (VFGAIDFWAQFAFLTVFLLVF) form a helical membrane-spanning segment. N-linked (GlcNAc...) asparagine glycosylation is present at Asn543. A disordered region spans residues 578–603 (AKRTVGGHPNGQGYGTSGTNGTASSR). The span at 585-595 (HPNGQGYGTSG) shows a compositional bias: gly residues. N-linked (GlcNAc...) asparagine glycosylation is present at Asn597.

The protein belongs to the LIMR family. LMBRD1 subfamily.

The protein resides in the lysosome membrane. Functionally, probable lysosomal cobalamin transporter. Required to export cobalamin from lysosomes allowing its conversion to cofactors. This Neurospora crassa (strain ATCC 24698 / 74-OR23-1A / CBS 708.71 / DSM 1257 / FGSC 987) protein is Probable lysosomal cobalamin transporter.